The sequence spans 48 residues: Putative protein P' (48 aa).

The protein is Putative protein P' of Bos taurus (Bovine).